A 231-amino-acid chain; its full sequence is uncharacterized protein (231 aa).

The signal sequence occupies residues 1 to 25 (MAKWVPALLLRRVPLFSLRFRPASS). Residues 26–200 (TFLPVLAATE…SRPSPSATLT (175 aa)) lie on the Extracellular side of the membrane. Residues 39–64 (SVPSGDLSMPVKTRAEGEDDGFGEAG) form a disordered region. A helical transmembrane segment spans residues 201–225 (LLLASSCLLAPAPPSFILLLFTLIA). Over 226-231 (PDLPHS) the chain is Cytoplasmic.

The protein resides in the membrane. This is an uncharacterized protein from Homo sapiens (Human).